The sequence spans 768 residues: MSPSAPANSAPDPDRNGVPDVGPASAAPPDLQTAAARAAWLRSTLQHHAHLYYVLDAPELPDAEYDRLFQELQAIEAMYPALRTADSPTQRVLGQVRDGFVVVRHAVPMLSIRTETDTEASGAVAFDARVRRELELPDDAPPISYATELKFDGLAINLRYEHGVLVQAATRGDGESGEDVTQNIRTIGQIPLRLRWAPTLGADAHSLPPEGARFALGRPGGETGAPDLAPAVLEVRGEVYMRRDDFEALNERQRERIARGDKGEKTFVNPRNAAAGAVRQLDPAIAAQRPLSFFAYGLGEVQGWALPHTHAGLLDALAAAGLPVCAERAVVQGADGLVAFHQRIGALRDSLAFDIDGVVYKVDSLALQQRLGFVTREPRWAVAHKYPAQEQMTRLLGIEIQVGRTGKLTPVARLEPVFVGGTTVSNATLHNEDEARRKDVRVGDTVIVRRAGDVIPQVVGVVLEQRPDDVGEPFDLYQRLGGRCPVCGSAIARPEGEADWRCTGGLFCAAQRKQAILHFASRRMMDIEGLGDKLVDQLVDAGVIRTLPELYKLGVAKLTALERMGEKSAVNLVAALEKSKQTTLARFLFSLGIRQVGEATAKALARHFGALDRVMDASVDQLQAVPDVGPIVALSIRTFFDQPHNREVVEQLRAAGIHWAEHEASAAADAAELPLAGKTLVLTGTLPTLGRDAAKDLIEAAGGKVSGSVSKKTHFVVAGAEAGSKLDKARELGLVILDEAGLLALLNEAEADADADAEGLPDSPVAPT.

Residues 1-11 (MSPSAPANSAP) are compositionally biased toward low complexity. The interval 1 to 28 (MSPSAPANSAPDPDRNGVPDVGPASAAP) is disordered. Residues 62-66 (DAEYD), 111-112 (SI), and Glu148 each bind NAD(+). Residue Lys150 is the N6-AMP-lysine intermediate of the active site. The NAD(+) site is built by Arg171, Glu238, Lys361, and Lys385. Residues Cys484, Cys487, Cys502, and Cys508 each contribute to the Zn(2+) site. In terms of domain architecture, BRCT spans 670 to 759 (AAELPLAGKT…EADADADAEG (90 aa)).

This sequence belongs to the NAD-dependent DNA ligase family. LigA subfamily. Mg(2+) is required as a cofactor. It depends on Mn(2+) as a cofactor.

It carries out the reaction NAD(+) + (deoxyribonucleotide)n-3'-hydroxyl + 5'-phospho-(deoxyribonucleotide)m = (deoxyribonucleotide)n+m + AMP + beta-nicotinamide D-nucleotide.. Functionally, DNA ligase that catalyzes the formation of phosphodiester linkages between 5'-phosphoryl and 3'-hydroxyl groups in double-stranded DNA using NAD as a coenzyme and as the energy source for the reaction. It is essential for DNA replication and repair of damaged DNA. The polypeptide is DNA ligase (Leptothrix cholodnii (strain ATCC 51168 / LMG 8142 / SP-6) (Leptothrix discophora (strain SP-6))).